A 270-amino-acid chain; its full sequence is Putative pyruvate, phosphate dikinase regulatory protein (270 aa).

An ADP-binding site is contributed by Gly151 to Thr158.

This sequence belongs to the pyruvate, phosphate/water dikinase regulatory protein family. PDRP subfamily.

It catalyses the reaction N(tele)-phospho-L-histidyl/L-threonyl-[pyruvate, phosphate dikinase] + ADP = N(tele)-phospho-L-histidyl/O-phospho-L-threonyl-[pyruvate, phosphate dikinase] + AMP + H(+). The catalysed reaction is N(tele)-phospho-L-histidyl/O-phospho-L-threonyl-[pyruvate, phosphate dikinase] + phosphate + H(+) = N(tele)-phospho-L-histidyl/L-threonyl-[pyruvate, phosphate dikinase] + diphosphate. Bifunctional serine/threonine kinase and phosphorylase involved in the regulation of the pyruvate, phosphate dikinase (PPDK) by catalyzing its phosphorylation/dephosphorylation. In Ligilactobacillus salivarius (strain UCC118) (Lactobacillus salivarius), this protein is Putative pyruvate, phosphate dikinase regulatory protein.